Here is a 297-residue protein sequence, read N- to C-terminus: MVHQVLYRALVSTKWLAESVRAGKVGPGLRVLDASWYSPGTREARKEYLERHVPGASFFDIEECRDKASPYEVMLPSEAGFADYVGSLGISNDTHVVVYDGDDLGSFYAPRVWWMFRVFGHRTVSVLNGGFRNWLKEGHPVTSEPSRPEPAIFKATLNRSLLKTYEQVLENLESKRFQLVDSRAQGRYLGTQPEPDAVGLDSGHIRGSVNMPFMNFLTEDGFEKSPEELRAMFEAKKVDLTKPLIATCRKGVTACHIALAAYLCGKPDVAIYDGSWFEWFHRAPPETWVSQGKGGKA.

Lysine 14 carries the post-translational modification N6-acetyllysine; alternate. Lysine 14 carries the post-translational modification N6-succinyllysine; alternate. Residues 25 to 143 (VGPGLRVLDA…WLKEGHPVTS (119 aa)) form the Rhodanese 1 domain. Serine 35 carries an O-linked (GlcNAc) serine glycan. Position 38 is a phosphoserine (serine 38). Lysine 136 carries the post-translational modification N6-acetyllysine; alternate. Lysine 136 carries the N6-succinyllysine; alternate modification. The segment at 144-159 (EPSRPEPAIFKATLNR) is hinge. Residue lysine 163 is modified to N6-acetyllysine. The region spanning 173–288 (ESKRFQLVDS…WFHRAPPETW (116 aa)) is the Rhodanese 2 domain. Lysine 175 is modified (N6-acetyllysine; alternate). Position 175 is an N6-succinyllysine; alternate (lysine 175). Arginine 187 provides a ligand contact to substrate. Position 224 is an N6-acetyllysine; alternate (lysine 224). At lysine 224 the chain carries N6-succinyllysine; alternate. Lysine 236 is subject to N6-acetyllysine. An N6-acetyllysine; alternate modification is found at lysine 237. N6-succinyllysine; alternate is present on lysine 237. The active-site Cysteine persulfide intermediate is the cysteine 248. Residue lysine 250 participates in substrate binding.

As to quaternary structure, monomer. As to expression, expressed in numerous tissues.

It localises to the mitochondrion matrix. It carries out the reaction thiosulfate + hydrogen cyanide = thiocyanate + sulfite + 2 H(+). In terms of biological role, together with MRPL18, acts as a mitochondrial import factor for the cytosolic 5S rRNA. Only the nascent unfolded cytoplasmic form is able to bind to the 5S rRNA. Formation of iron-sulfur complexes and cyanide detoxification. Binds molecular oxygen and sulfur. This is Thiosulfate sulfurtransferase (TST) from Bos taurus (Bovine).